Consider the following 447-residue polypeptide: UPF0210 protein LAF_0976 (447 aa).

This sequence belongs to the UPF0210 family. As to quaternary structure, homodimer.

The polypeptide is UPF0210 protein LAF_0976 (Limosilactobacillus fermentum (strain NBRC 3956 / LMG 18251) (Lactobacillus fermentum)).